A 245-amino-acid polypeptide reads, in one-letter code: Sugar fermentation stimulation protein homolog (245 aa).

Belongs to the SfsA family.

The protein is Sugar fermentation stimulation protein homolog of Rhodospirillum rubrum (strain ATCC 11170 / ATH 1.1.1 / DSM 467 / LMG 4362 / NCIMB 8255 / S1).